The chain runs to 318 residues: L-lactate dehydrogenase (318 aa).

Residues Val-20, Asp-41, Lys-46, Tyr-71, and 85-86 (GA) contribute to the NAD(+) site. Residues Gln-88, Arg-94, and 126 to 129 (NPVD) each bind substrate. NAD(+) is bound by residues 124-126 (ATN) and Ser-149. 154–157 (DTAR) serves as a coordination point for substrate. Beta-D-fructose 1,6-bisphosphate is bound by residues Arg-159 and His-174. His-181 (proton acceptor) is an active-site residue. Position 226 is a phosphotyrosine (Tyr-226). Thr-235 serves as a coordination point for substrate.

This sequence belongs to the LDH/MDH superfamily. LDH family. Homotetramer.

The protein localises to the cytoplasm. It carries out the reaction (S)-lactate + NAD(+) = pyruvate + NADH + H(+). Its pathway is fermentation; pyruvate fermentation to lactate; (S)-lactate from pyruvate: step 1/1. With respect to regulation, allosterically activated by fructose 1,6-bisphosphate (FBP). Catalyzes the conversion of lactate to pyruvate. The polypeptide is L-lactate dehydrogenase (Priestia megaterium (Bacillus megaterium)).